The following is a 388-amino-acid chain: Zinc finger CCCH domain-containing protein 47 (388 aa).

Disordered regions lie at residues 1–130 (MADP…MAPL) and 144–282 (PLHE…TPSA). Composition is skewed to basic and acidic residues over residues 61–109 (AAND…KSEV) and 181–193 (PDNH…HLPR). Residues 260 to 274 (ASSSSSSSSAGQQGS) show a composition bias toward low complexity. C3H1-type zinc fingers lie at residues 321-348 (HHKI…HGEE) and 359-388 (GGGG…HGGV).

The chain is Zinc finger CCCH domain-containing protein 47 from Oryza sativa subsp. japonica (Rice).